A 205-amino-acid polypeptide reads, in one-letter code: Probable thymidylate kinase (205 aa).

Position 10–17 (10–17 (GIDGSGKT)) interacts with ATP.

The protein belongs to the thymidylate kinase family.

It carries out the reaction dTMP + ATP = dTDP + ADP. This chain is Probable thymidylate kinase (tmk), found in Pyrococcus abyssi (strain GE5 / Orsay).